The primary structure comprises 372 residues: Alpha-parvin (372 aa).

The disordered stretch occupies residues 1–31 (MATSPQKSPLVPKSPTPKSPPSRKKDDSFLG). Residue Ala-2 is modified to N-acetylalanine. 3 positions are modified to phosphoserine: Ser-8, Ser-14, and Ser-19. An interaction with ARHGAP31 region spans residues 21-25 (PSRKK). Phosphoserine occurs at positions 28 and 62. Calponin-homology (CH) domains follow at residues 95-202 (QELM…QYFR) and 262-369 (NVVK…TKYR). The required for interaction with TESK1 and ILK stretch occupies residues 223-372 (GILQSRQIQE…NLFTKYRNVE (150 aa)).

This sequence belongs to the parvin family. Component of the heterotrimeric IPP (ILK-PINCH-PARVIN) complex composed of ILK, LIMS1/PINCH and PARVA; the complex binds to F-actin via the C-terminal tail of LIMS1 and the N-terminal region of PARVA, promoting F-actin filament bundling. Interacts with TGFB1I1. Interacts with ARHGAP31. Interacts with the actin cytoskeleton. Interacts (via C-terminus) with TESK1 (via C-terminus); the interaction inhibits TESK1 kinase activity. Interacts with PXN/PAXILLIN (via LD motif 4).

Its subcellular location is the cell junction. It localises to the focal adhesion. The protein localises to the cell membrane. The protein resides in the cytoplasm. It is found in the cytoskeleton. Its subcellular location is the myofibril. It localises to the sarcomere. The protein localises to the z line. Its function is as follows. Plays a role in sarcomere organization and in smooth muscle cell contraction. Required for normal development of the embryonic cardiovascular system, and for normal septation of the heart outflow tract. Plays a role in sprouting angiogenesis and is required for normal adhesion of vascular smooth muscle cells to endothelial cells during blood vessel development. Plays a role in the reorganization of the actin cytoskeleton, formation of lamellipodia and ciliogenesis. Plays a role in the establishment of cell polarity, cell adhesion, cell spreading, and directed cell migration. Within the IPP (ILK-PINCH-PARVIN) complex, binds to F-actin, promoting F-actin bundling, a process required to generate force for actin cytoskeleton reorganization and subsequent dynamic cell adhesion events such as cell spreading and migration. The sequence is that of Alpha-parvin (Parva) from Mus musculus (Mouse).